Reading from the N-terminus, the 113-residue chain is Ribonuclease P protein component (113 aa).

It belongs to the RnpA family. As to quaternary structure, consists of a catalytic RNA component (M1 or rnpB) and a protein subunit.

It catalyses the reaction Endonucleolytic cleavage of RNA, removing 5'-extranucleotides from tRNA precursor.. Functionally, RNaseP catalyzes the removal of the 5'-leader sequence from pre-tRNA to produce the mature 5'-terminus. It can also cleave other RNA substrates such as 4.5S RNA. The protein component plays an auxiliary but essential role in vivo by binding to the 5'-leader sequence and broadening the substrate specificity of the ribozyme. The chain is Ribonuclease P protein component from Desulforamulus reducens (strain ATCC BAA-1160 / DSM 100696 / MI-1) (Desulfotomaculum reducens).